We begin with the raw amino-acid sequence, 1429 residues long: Gag-Pol polyprotein (1429 aa).

Gly-2 carries N-myristoyl glycine; by host lipidation. An interaction with Gp41 region spans residues Val-7 to Leu-31. Residues Leu-8–Arg-43 form an interaction with host CALM1 region. Positions Lys-12–Ile-19 are interaction with host AP3D1. Positions Asp-14–His-33 are interaction with membrane phosphatidylinositol 4,5-bisphosphate and RNA. The Nuclear export signal signature appears at Trp-16 to Arg-22. The short motif at Lys-26–Lys-32 is the Nuclear localization signal element. The segment at Glu-73–Ser-77 is interaction with membrane phosphatidylinositol 4,5-bisphosphate. Residues Glu-105–Val-124 are disordered. Residues Arg-110–Val-124 are compositionally biased toward polar residues. Tyr-128 bears the Phosphotyrosine; by host mark. The interval Asn-185 to Gln-223 is interaction with human PPIA/CYPA and NUP153. The segment at Tyr-273–Leu-359 is dimerization/Multimerization of capsid protein p24. 2 CCHC-type zinc fingers span residues Ile-385–Ala-402 and Lys-406–Glu-423. Residues Glu-439–Ser-479 are disordered. 2 stretches are compositionally biased toward polar residues: residues Ser-445–Ser-455 and Leu-467–Ser-479. The interval Pro-484–Leu-488 is dimerization of protease. The 70-residue stretch at Arg-503–Met-572 folds into the Peptidase A2 domain. The active-site For protease activity; shared with dimeric partner is the Asp-508. Dimerization of protease stretches follow at residues Gly-532–Lys-538 and Asn-571–Pro-583. The Reverse transcriptase domain maps to Glu-626 to Leu-816. Mg(2+) is bound by residues Asp-692, Asp-767, and Asp-768. Residues Phe-809–His-817 are RT 'primer grip'. The Tryptophan repeat motif motif lies at Trp-980 to Trp-996. The RNase H type-1 domain maps to Ile-1016–Arg-1139. 4 residues coordinate Mg(2+): Asp-1025, Glu-1060, Asp-1080, and Asp-1131. The Integrase-type zinc finger occupies Asp-1145–Gln-1186. Zn(2+)-binding residues include His-1154, His-1158, Cys-1182, and Cys-1185. Residues Val-1196–Ile-1346 enclose the Integrase catalytic domain. Mg(2+) contacts are provided by Asp-1206, Asp-1258, and Glu-1294. Residues Phe-1365–Asp-1411 constitute a DNA-binding region (integrase-type).

As to quaternary structure, homotrimer; further assembles as hexamers of trimers. Interacts with gp41 (via C-terminus). Interacts with host CALM1; this interaction induces a conformational change in the Matrix protein, triggering exposure of the myristate group. Interacts with host AP3D1; this interaction allows the polyprotein trafficking to multivesicular bodies during virus assembly. Part of the pre-integration complex (PIC) which is composed of viral genome, matrix protein, Vpr and integrase. Homodimer; the homodimer further multimerizes as homohexamers or homopentamers. Interacts with human PPIA/CYPA; This interaction stabilizes the capsid. Interacts with human NUP153. Interacts with host PDZD8; this interaction stabilizes the capsid. Interacts with monkey TRIM5; this interaction destabilizes the capsid. In terms of assembly, homodimer, whose active site consists of two apposed aspartic acid residues. As to quaternary structure, heterodimer of p66 RT and p51 RT (RT p66/p51). Heterodimerization of RT is essential for DNA polymerase activity. The overall folding of the subdomains is similar in p66 RT and p51 RT but the spatial arrangements of the subdomains are dramatically different. Homotetramer; may further associate as a homohexadecamer. Part of the pre-integration complex (PIC) which is composed of viral genome, matrix protein, Vpr and integrase. Interacts with human SMARCB1/INI1 and human PSIP1/LEDGF isoform 1. Interacts with human KPNA3; this interaction might play a role in nuclear import of the pre-integration complex. Interacts with human NUP153; this interaction might play a role in nuclear import of the pre-integration complex. It depends on Mg(2+) as a cofactor. Specific enzymatic cleavages by the viral protease yield mature proteins. The protease is released by autocatalytic cleavage. The polyprotein is cleaved during and after budding, this process is termed maturation. Proteolytic cleavage of p66 RT removes the RNase H domain to yield the p51 RT subunit. Nucleocapsid protein p7 might be further cleaved after virus entry. In terms of processing, tyrosine phosphorylated presumably in the virion by a host kinase. Phosphorylation is apparently not a major regulator of membrane association. Post-translationally, phosphorylated possibly by host MAPK1; this phosphorylation is necessary for Pin1-mediated virion uncoating. Methylated by host PRMT6, impairing its function by reducing RNA annealing and the initiation of reverse transcription.

The protein localises to the host cell membrane. It is found in the host endosome. The protein resides in the host multivesicular body. It localises to the virion membrane. Its subcellular location is the host nucleus. The protein localises to the host cytoplasm. It is found in the virion. It carries out the reaction Specific for a P1 residue that is hydrophobic, and P1' variable, but often Pro.. The catalysed reaction is Endohydrolysis of RNA in RNA/DNA hybrids. Three different cleavage modes: 1. sequence-specific internal cleavage of RNA. Human immunodeficiency virus type 1 and Moloney murine leukemia virus enzymes prefer to cleave the RNA strand one nucleotide away from the RNA-DNA junction. 2. RNA 5'-end directed cleavage 13-19 nucleotides from the RNA end. 3. DNA 3'-end directed cleavage 15-20 nucleotides away from the primer terminus.. It catalyses the reaction 3'-end directed exonucleolytic cleavage of viral RNA-DNA hybrid.. The enzyme catalyses DNA(n) + a 2'-deoxyribonucleoside 5'-triphosphate = DNA(n+1) + diphosphate. With respect to regulation, protease: The viral protease is inhibited by many synthetic protease inhibitors (PIs), such as amprenavir, atazanavir, indinavir, loprinavir, nelfinavir, ritonavir and saquinavir. Use of protease inhibitors in tritherapy regimens permit more ambitious therapeutic strategies. Reverse transcriptase/ribonuclease H: RT can be inhibited either by nucleoside RT inhibitors (NRTIs) or by non nucleoside RT inhibitors (NNRTIs). NRTIs act as chain terminators, whereas NNRTIs inhibit DNA polymerization by binding a small hydrophobic pocket near the RT active site and inducing an allosteric change in this region. Classical NRTIs are abacavir, adefovir (PMEA), didanosine (ddI), lamivudine (3TC), stavudine (d4T), tenofovir (PMPA), zalcitabine (ddC), and zidovudine (AZT). Classical NNRTIs are atevirdine (BHAP U-87201E), delavirdine, efavirenz (DMP-266), emivirine (I-EBU), and nevirapine (BI-RG-587). The tritherapies used as a basic effective treatment of AIDS associate two NRTIs and one NNRTI. Functionally, mediates, with Gag polyprotein, the essential events in virion assembly, including binding the plasma membrane, making the protein-protein interactions necessary to create spherical particles, recruiting the viral Env proteins, and packaging the genomic RNA via direct interactions with the RNA packaging sequence (Psi). Gag-Pol polyprotein may regulate its own translation, by the binding genomic RNA in the 5'-UTR. At low concentration, the polyprotein would promote translation, whereas at high concentration, the polyprotein would encapsidate genomic RNA and then shut off translation. Its function is as follows. Targets the polyprotein to the plasma membrane via a multipartite membrane-binding signal, that includes its myristoylated N-terminus. Matrix protein is part of the pre-integration complex. Implicated in the release from host cell mediated by Vpu. Binds to RNA. Forms the conical core that encapsulates the genomic RNA-nucleocapsid complex in the virion. Most core are conical, with only 7% tubular. The core is constituted by capsid protein hexamer subunits. The core is disassembled soon after virion entry. Host restriction factors such as TRIM5-alpha or TRIMCyp bind retroviral capsids and cause premature capsid disassembly, leading to blocks in reverse transcription. Capsid restriction by TRIM5 is one of the factors which restricts HIV-1 to the human species. Host PIN1 apparently facilitates the virion uncoating. On the other hand, interactions with PDZD8 or CYPA stabilize the capsid. In terms of biological role, encapsulates and protects viral dimeric unspliced genomic RNA (gRNA). Binds these RNAs through its zinc fingers. Acts as a nucleic acid chaperone which is involved in rearangement of nucleic acid secondary structure during gRNA retrotranscription. Also facilitates template switch leading to recombination. As part of the polyprotein, participates in gRNA dimerization, packaging, tRNA incorporation and virion assembly. Functionally, aspartyl protease that mediates proteolytic cleavages of Gag and Gag-Pol polyproteins during or shortly after the release of the virion from the plasma membrane. Cleavages take place as an ordered, step-wise cascade to yield mature proteins. This process is called maturation. Displays maximal activity during the budding process just prior to particle release from the cell. Also cleaves Nef and Vif, probably concomitantly with viral structural proteins on maturation of virus particles. Hydrolyzes host EIF4GI and PABP1 in order to shut off the capped cellular mRNA translation. The resulting inhibition of cellular protein synthesis serves to ensure maximal viral gene expression and to evade host immune response. Also mediates cleavage of host YTHDF3. Mediates cleavage of host CARD8, thereby activating the CARD8 inflammasome, leading to the clearance of latent HIV-1 in patient CD4(+) T-cells after viral reactivation; in contrast, HIV-1 can evade CARD8-sensing when its protease remains inactive in infected cells prior to viral budding. Its function is as follows. Multifunctional enzyme that converts the viral RNA genome into dsDNA in the cytoplasm, shortly after virus entry into the cell. This enzyme displays a DNA polymerase activity that can copy either DNA or RNA templates, and a ribonuclease H (RNase H) activity that cleaves the RNA strand of RNA-DNA heteroduplexes in a partially processive 3' to 5' endonucleasic mode. Conversion of viral genomic RNA into dsDNA requires many steps. A tRNA(3)-Lys binds to the primer-binding site (PBS) situated at the 5'-end of the viral RNA. RT uses the 3' end of the tRNA primer to perform a short round of RNA-dependent minus-strand DNA synthesis. The reading proceeds through the U5 region and ends after the repeated (R) region which is present at both ends of viral RNA. The portion of the RNA-DNA heteroduplex is digested by the RNase H, resulting in a ssDNA product attached to the tRNA primer. This ssDNA/tRNA hybridizes with the identical R region situated at the 3' end of viral RNA. This template exchange, known as minus-strand DNA strong stop transfer, can be either intra- or intermolecular. RT uses the 3' end of this newly synthesized short ssDNA to perform the RNA-dependent minus-strand DNA synthesis of the whole template. RNase H digests the RNA template except for two polypurine tracts (PPTs) situated at the 5'-end and near the center of the genome. It is not clear if both polymerase and RNase H activities are simultaneous. RNase H probably can proceed both in a polymerase-dependent (RNA cut into small fragments by the same RT performing DNA synthesis) and a polymerase-independent mode (cleavage of remaining RNA fragments by free RTs). Secondly, RT performs DNA-directed plus-strand DNA synthesis using the PPTs that have not been removed by RNase H as primers. PPTs and tRNA primers are then removed by RNase H. The 3' and 5' ssDNA PBS regions hybridize to form a circular dsDNA intermediate. Strand displacement synthesis by RT to the PBS and PPT ends produces a blunt ended, linear dsDNA copy of the viral genome that includes long terminal repeats (LTRs) at both ends. Catalyzes viral DNA integration into the host chromosome, by performing a series of DNA cutting and joining reactions. This enzyme activity takes place after virion entry into a cell and reverse transcription of the RNA genome in dsDNA. The first step in the integration process is 3' processing. This step requires a complex comprising the viral genome, matrix protein, Vpr and integrase. This complex is called the pre-integration complex (PIC). The integrase protein removes 2 nucleotides from each 3' end of the viral DNA, leaving recessed CA OH's at the 3' ends. In the second step, the PIC enters cell nucleus. This process is mediated through integrase and Vpr proteins, and allows the virus to infect a non dividing cell. This ability to enter the nucleus is specific of lentiviruses, other retroviruses cannot and rely on cell division to access cell chromosomes. In the third step, termed strand transfer, the integrase protein joins the previously processed 3' ends to the 5' ends of strands of target cellular DNA at the site of integration. The 5'-ends are produced by integrase-catalyzed staggered cuts, 5 bp apart. A Y-shaped, gapped, recombination intermediate results, with the 5'-ends of the viral DNA strands and the 3' ends of target DNA strands remaining unjoined, flanking a gap of 5 bp. The last step is viral DNA integration into host chromosome. This involves host DNA repair synthesis in which the 5 bp gaps between the unjoined strands are filled in and then ligated. Since this process occurs at both cuts flanking the HIV genome, a 5 bp duplication of host DNA is produced at the ends of HIV-1 integration. Alternatively, Integrase may catalyze the excision of viral DNA just after strand transfer, this is termed disintegration. This chain is Gag-Pol polyprotein (gag-pol), found in Homo sapiens (Human).